A 672-amino-acid chain; its full sequence is Tubulin--tyrosine ligase-like protein 12 (672 aa).

Residues 332–670 (KIKIFLQIFA…LDEIDPTKVT (339 aa)) enclose the TTL domain. ATP is bound by residues 480 to 483 (CEYI), Lys499, and Asp501.

This sequence belongs to the tubulin--tyrosine ligase family.

Its function is as follows. Regulates microtubule dynamics in uterine muscle cells. This chain is Tubulin--tyrosine ligase-like protein 12, found in Caenorhabditis briggsae.